Here is a 371-residue protein sequence, read N- to C-terminus: tRNA-specific 2-thiouridylase MnmA (371 aa).

ATP is bound by residues 24-31 (AMSGGVDS) and L50. C119 functions as the Nucleophile in the catalytic mechanism. A disulfide bridge connects residues C119 and C215. G143 provides a ligand contact to ATP. Positions 165–167 (KDQ) are interaction with tRNA. The active-site Cysteine persulfide intermediate is the C215.

This sequence belongs to the MnmA/TRMU family.

The protein localises to the cytoplasm. The catalysed reaction is S-sulfanyl-L-cysteinyl-[protein] + uridine(34) in tRNA + AH2 + ATP = 2-thiouridine(34) in tRNA + L-cysteinyl-[protein] + A + AMP + diphosphate + H(+). In terms of biological role, catalyzes the 2-thiolation of uridine at the wobble position (U34) of tRNA, leading to the formation of s(2)U34. This Neorickettsia sennetsu (strain ATCC VR-367 / Miyayama) (Ehrlichia sennetsu) protein is tRNA-specific 2-thiouridylase MnmA.